Here is a 402-residue protein sequence, read N- to C-terminus: Glutamate N-acetyltransferase (402 aa).

Residues Thr-146, Lys-172, Thr-185, Glu-267, Asn-397, and Thr-402 each coordinate substrate. Thr-185 (nucleophile) is an active-site residue.

Belongs to the ArgJ family. As to quaternary structure, heterotetramer of two alpha and two beta chains.

The protein localises to the cytoplasm. The catalysed reaction is N(2)-acetyl-L-ornithine + L-glutamate = N-acetyl-L-glutamate + L-ornithine. It functions in the pathway amino-acid biosynthesis; L-arginine biosynthesis; L-ornithine and N-acetyl-L-glutamate from L-glutamate and N(2)-acetyl-L-ornithine (cyclic): step 1/1. Competitively inhibited by L-ornithine. Catalyzes the transfer of the acetyl group from N(2)-acetylornithine to glutamate, forming N-acetylglutamate and L-ornithine. This Methanocaldococcus jannaschii (strain ATCC 43067 / DSM 2661 / JAL-1 / JCM 10045 / NBRC 100440) (Methanococcus jannaschii) protein is Glutamate N-acetyltransferase.